The following is a 224-amino-acid chain: Octanoyltransferase (224 aa).

Residues 29-224 form the BPL/LPL catalytic domain; sequence PGTPDELWLC…GDRLESYLSP (196 aa). Substrate contacts are provided by residues 68-75, 157-159, and 170-172; these read RGGQVTYH, ALG, and GLA. Cys-188 (acyl-thioester intermediate) is an active-site residue.

It belongs to the LipB family.

The protein resides in the cytoplasm. The enzyme catalyses octanoyl-[ACP] + L-lysyl-[protein] = N(6)-octanoyl-L-lysyl-[protein] + holo-[ACP] + H(+). Its pathway is protein modification; protein lipoylation via endogenous pathway; protein N(6)-(lipoyl)lysine from octanoyl-[acyl-carrier-protein]: step 1/2. Functionally, catalyzes the transfer of endogenously produced octanoic acid from octanoyl-acyl-carrier-protein onto the lipoyl domains of lipoate-dependent enzymes. Lipoyl-ACP can also act as a substrate although octanoyl-ACP is likely to be the physiological substrate. This chain is Octanoyltransferase, found in Methylibium petroleiphilum (strain ATCC BAA-1232 / LMG 22953 / PM1).